A 58-amino-acid chain; its full sequence is Large ribosomal subunit protein bL32 (58 aa).

It belongs to the bacterial ribosomal protein bL32 family.

The polypeptide is Large ribosomal subunit protein bL32 (Caldicellulosiruptor saccharolyticus (strain ATCC 43494 / DSM 8903 / Tp8T 6331)).